Consider the following 441-residue polypeptide: Probable dihydroorotase-like protein (441 aa).

Residues 121–140 (VNAHHQPPGDPQAENRPDSA) are disordered.

This sequence belongs to the metallo-dependent hydrolases superfamily. DHOase family. PyrC' subfamily.

Non-functional DHOase. The protein is Probable dihydroorotase-like protein (pyrC') of Synechocystis sp. (strain ATCC 27184 / PCC 6803 / Kazusa).